The following is a 393-amino-acid chain: Cyclin CCL1 (393 aa).

A compositionally biased stretch (polar residues) spans methionine 1–methionine 19. Disordered stretches follow at residues methionine 1 to aspartate 45 and serine 289 to tyrosine 325. Basic and acidic residues-rich tracts occupy residues alanine 21 to asparagine 35 and asparagine 300 to glutamate 321.

This sequence belongs to the cyclin family. Cyclin C subfamily. As to quaternary structure, CCL1 and KIN28 form the TFIIK complex, a component of TFIIH holo complex. Component of a complex consisting of KIN28, CCL1 and TFB3.

In terms of biological role, regulatory component of the TFIIK complex (KIN28-CCL1 dimer) which is the protein kinase component of transcription factor IIH (TFIIH) and phosphorylates the C-terminal domain of RNA polymerase II during transition from transcription to elongation after preinitiation complex (PIC) formation, thereby positively regulating transcription. TFIIH (or factor B) is essential for both basal and activated transcription, and is involved in nucleotide excision repair (NER) of damaged DNA. TFIIH has DNA-dependent ATPase activity and is essential for polymerase II transcription in vitro. The chain is Cyclin CCL1 (CCL1) from Saccharomyces cerevisiae (strain ATCC 204508 / S288c) (Baker's yeast).